We begin with the raw amino-acid sequence, 44 residues long: Putative keratin-associated protein 20-4 (44 aa).

It belongs to the KRTAP type 20 family. As to quaternary structure, interacts with hair keratins.

In the hair cortex, hair keratin intermediate filaments are embedded in an interfilamentous matrix, consisting of hair keratin-associated proteins (KRTAP), which are essential for the formation of a rigid and resistant hair shaft through their extensive disulfide bond cross-linking with abundant cysteine residues of hair keratins. The matrix proteins include the high-sulfur and high-glycine-tyrosine keratins. The polypeptide is Putative keratin-associated protein 20-4 (KRTAP20-4) (Homo sapiens (Human)).